A 271-amino-acid polypeptide reads, in one-letter code: Undecaprenyl-diphosphatase (271 aa).

Helical transmembrane passes span leucine 5–serine 25, phenylalanine 43–phenylalanine 63, glycine 80–leucine 100, leucine 109–isoleucine 129, valine 145–methionine 165, alanine 186–valine 206, leucine 215–valine 235, and valine 246–alanine 266.

This sequence belongs to the UppP family.

The protein resides in the cell membrane. The enzyme catalyses di-trans,octa-cis-undecaprenyl diphosphate + H2O = di-trans,octa-cis-undecaprenyl phosphate + phosphate + H(+). Functionally, catalyzes the dephosphorylation of undecaprenyl diphosphate (UPP). Confers resistance to bacitracin. The chain is Undecaprenyl-diphosphatase from Caldanaerobacter subterraneus subsp. tengcongensis (strain DSM 15242 / JCM 11007 / NBRC 100824 / MB4) (Thermoanaerobacter tengcongensis).